The following is a 244-amino-acid chain: ATP synthase subunit a, chloroplastic (244 aa).

The next 5 helical transmembrane spans lie at 35 to 55, 92 to 112, 131 to 151, 196 to 216, and 217 to 237; these read QVLI…VIAV, VPFI…GALL, INTT…AGLS, LVVV…VMFL, and GLFT…AYIG.

It belongs to the ATPase A chain family. In terms of assembly, F-type ATPases have 2 components, CF(1) - the catalytic core - and CF(0) - the membrane proton channel. CF(1) has five subunits: alpha(3), beta(3), gamma(1), delta(1), epsilon(1). CF(0) has four main subunits: a, b, b' and c.

Its subcellular location is the plastid. The protein resides in the chloroplast thylakoid membrane. Functionally, key component of the proton channel; it plays a direct role in the translocation of protons across the membrane. This Gossypium hirsutum (Upland cotton) protein is ATP synthase subunit a, chloroplastic.